The chain runs to 160 residues: Putative 4-hydroxy-4-methyl-2-oxoglutarate aldolase (160 aa).

Residues 75–78 (GDQL) and arginine 97 contribute to the substrate site. Residue aspartate 98 coordinates a divalent metal cation.

This sequence belongs to the class II aldolase/RraA-like family. In terms of assembly, homotrimer. It depends on a divalent metal cation as a cofactor.

The enzyme catalyses 4-hydroxy-4-methyl-2-oxoglutarate = 2 pyruvate. The catalysed reaction is oxaloacetate + H(+) = pyruvate + CO2. Catalyzes the aldol cleavage of 4-hydroxy-4-methyl-2-oxoglutarate (HMG) into 2 molecules of pyruvate. Also contains a secondary oxaloacetate (OAA) decarboxylase activity due to the common pyruvate enolate transition state formed following C-C bond cleavage in the retro-aldol and decarboxylation reactions. In Vibrio vulnificus (strain YJ016), this protein is Putative 4-hydroxy-4-methyl-2-oxoglutarate aldolase.